We begin with the raw amino-acid sequence, 264 residues long: Apolipoprotein A-I (264 aa).

The first 18 residues, 1–18 (MRVVVVTLALLFLTGTQA), serve as a signal peptide directing secretion. 2 tandem repeats follow at residues 67–88 (LKLA…EDMA) and 89–110 (PYYK…AELT). The segment at 67–264 (LKLADNLDTL…LLDELQKTVA (198 aa)) is 10 X approximate tandem repeats. One copy of the 3; half-length repeat lies at 111–121 (KDLEEVKEKIR). A run of 5 repeats spans residues 122-143 (PFLD…QRLA), 144-165 (PVAE…QKLT), 166-187 (PVAE…KNLA), 188-209 (PYSD…EKGI), and 210-231 (PQAA…EKMT). The 9; half-length repeat unit spans residues 232 to 242 (PLVQDFKERLT). Copy 10 of the repeat occupies 243-264 (PYAENLKTRFISLLDELQKTVA).

This sequence belongs to the apolipoprotein A1/A4/E family. As to expression, major protein of plasma HDL, also found in chylomicrons.

It localises to the secreted. Its function is as follows. Participates in the reverse transport of cholesterol from tissues to the liver for excretion by promoting cholesterol efflux from tissues and by acting as a cofactor for the lecithin cholesterol acyltransferase (LCAT). The chain is Apolipoprotein A-I (APOA1) from Anas platyrhynchos (Mallard).